The primary structure comprises 234 residues: Phosphoribosylaminoimidazole-succinocarboxamide synthase (234 aa).

This sequence belongs to the SAICAR synthetase family.

It carries out the reaction 5-amino-1-(5-phospho-D-ribosyl)imidazole-4-carboxylate + L-aspartate + ATP = (2S)-2-[5-amino-1-(5-phospho-beta-D-ribosyl)imidazole-4-carboxamido]succinate + ADP + phosphate + 2 H(+). The protein operates within purine metabolism; IMP biosynthesis via de novo pathway; 5-amino-1-(5-phospho-D-ribosyl)imidazole-4-carboxamide from 5-amino-1-(5-phospho-D-ribosyl)imidazole-4-carboxylate: step 1/2. In Streptococcus uberis (strain ATCC BAA-854 / 0140J), this protein is Phosphoribosylaminoimidazole-succinocarboxamide synthase.